A 337-amino-acid polypeptide reads, in one-letter code: Glyceraldehyde-3-phosphate dehydrogenase (337 aa).

NAD(+) contacts are provided by residues 12–13 (RI), D34, and R79. Residues 150 to 152 (SCT), T181, 210 to 211 (TG), and R233 each bind D-glyceraldehyde 3-phosphate. Catalysis depends on C151, which acts as the Nucleophile. N315 contributes to the NAD(+) binding site.

This sequence belongs to the glyceraldehyde-3-phosphate dehydrogenase family. As to quaternary structure, homotetramer.

Its subcellular location is the cytoplasm. It catalyses the reaction D-glyceraldehyde 3-phosphate + phosphate + NAD(+) = (2R)-3-phospho-glyceroyl phosphate + NADH + H(+). Its pathway is carbohydrate degradation; glycolysis; pyruvate from D-glyceraldehyde 3-phosphate: step 1/5. The chain is Glyceraldehyde-3-phosphate dehydrogenase (GPD) from Omphalotus olearius (Jack o'lantern).